Consider the following 151-residue polypeptide: UPF0756 membrane protein LBA0919 (151 aa).

The next 4 helical transmembrane spans lie at 4 to 24 (WLFL…SLII), 52 to 72 (WGVT…QIGF), 78 to 98 (TFKT…AVLS), and 115 to 135 (LVLG…GPVI).

This sequence belongs to the UPF0756 family.

Its subcellular location is the cell membrane. This is UPF0756 membrane protein LBA0919 from Lactobacillus acidophilus (strain ATCC 700396 / NCK56 / N2 / NCFM).